The primary structure comprises 156 residues: Succinate dehydrogenase assembly factor 2-A, mitochondrial (156 aa).

Residues 1–24 (MLRQFLVSTAVRRVVVPSMAQTRC) constitute a mitochondrion transit peptide. The interval 35–62 (TPGEIVDYDDPPHIPVPEYPSRPDEPLE) is disordered.

The protein belongs to the SDHAF2 family. Interacts with the flavoprotein subunit within the SDH catalytic dimer.

It localises to the mitochondrion matrix. Plays an essential role in the assembly of succinate dehydrogenase (SDH), an enzyme complex (also referred to as respiratory complex II) that is a component of both the tricarboxylic acid (TCA) cycle and the mitochondrial electron transport chain, and which couples the oxidation of succinate to fumarate with the reduction of ubiquinone (coenzyme Q) to ubiquinol. Required for flavinylation (covalent attachment of FAD) of the flavoprotein subunit of the SDH catalytic dimer. In Drosophila ananassae (Fruit fly), this protein is Succinate dehydrogenase assembly factor 2-A, mitochondrial.